We begin with the raw amino-acid sequence, 209 residues long: MIGLVGKKVGMTRIFTEDGVSIPVTVIEIEANRVTQVKDLANDGYRAVQVTAGAKKANRVTKPEAGHFAKAGVEAGRTLREFRLSEGEEFTVGQSISVEIFADIKKVDVTGTSKGKGFAGTVKRWNFRTQDATHGNSLSHRAPGSIGQNQTPGKVFKGKKMAGQLGNERVTVQSLDVVRVDAERNLLLVKGAVPGATGSDLIVKPAVKA.

The interval 133–153 (THGNSLSHRAPGSIGQNQTPG) is disordered. An N5-methylglutamine modification is found at Gln-150.

Belongs to the universal ribosomal protein uL3 family. As to quaternary structure, part of the 50S ribosomal subunit. Forms a cluster with proteins L14 and L19. Methylated by PrmB.

In terms of biological role, one of the primary rRNA binding proteins, it binds directly near the 3'-end of the 23S rRNA, where it nucleates assembly of the 50S subunit. This chain is Large ribosomal subunit protein uL3, found in Pectobacterium atrosepticum (strain SCRI 1043 / ATCC BAA-672) (Erwinia carotovora subsp. atroseptica).